The following is a 227-amino-acid chain: uncharacterized protein (227 aa).

A run of 4 helical transmembrane segments spans residues 17–37, 79–99, 112–132, and 181–201; these read VGIK…GVFS, GFLF…IISI, LMTP…LALI, and VAVF…ILVF.

Its subcellular location is the cell membrane. This is an uncharacterized protein from Escherichia coli (strain K12).